A 265-amino-acid polypeptide reads, in one-letter code: Small ribosomal subunit protein eS1 (265 aa).

Disordered stretches follow at residues Met-1–Asp-24 and His-240–Gln-265. The span at His-240–Ala-253 shows a compositional bias: basic and acidic residues.

It belongs to the eukaryotic ribosomal protein eS1 family. As to quaternary structure, component of the small ribosomal subunit. Mature ribosomes consist of a small (40S) and a large (60S) subunit. The 40S subunit contains about 33 different proteins and 1 molecule of RNA (18S). The 60S subunit contains about 49 different proteins and 3 molecules of RNA (25S, 5.8S and 5S).

Its subcellular location is the cytoplasm. The polypeptide is Small ribosomal subunit protein eS1 (Tetrahymena thermophila (strain SB210)).